Reading from the N-terminus, the 557-residue chain is Arginine--tRNA ligase (557 aa).

A 'HIGH' region motif is present at residues 132–142 (ANPTGLLHMGN).

Belongs to the class-I aminoacyl-tRNA synthetase family. Monomer.

The protein localises to the cytoplasm. The catalysed reaction is tRNA(Arg) + L-arginine + ATP = L-arginyl-tRNA(Arg) + AMP + diphosphate. In Carboxydothermus hydrogenoformans (strain ATCC BAA-161 / DSM 6008 / Z-2901), this protein is Arginine--tRNA ligase.